We begin with the raw amino-acid sequence, 234 residues long: Opacity protein V28 (234 aa).

Alanine 1 is a signal peptide.

It belongs to the opacity porin family.

It is found in the cell outer membrane. In terms of biological role, implicated in a number of adherence functions. OPA proteins are implicated in pathogenesis and are subject to phase variation. The sequence is that of Opacity protein V28 from Neisseria gonorrhoeae.